Reading from the N-terminus, the 198-residue chain is Glycerol-3-phosphate acyltransferase (198 aa).

5 consecutive transmembrane segments (helical) span residues 5 to 25, 56 to 76, 84 to 104, 114 to 134, and 158 to 178; these read LILL…LWIG, SIVT…PFFF, FWLL…FAGF, AGVI…VFLV, and LFMG…FVIW.

It belongs to the PlsY family. In terms of assembly, probably interacts with PlsX.

The protein resides in the cell membrane. It catalyses the reaction an acyl phosphate + sn-glycerol 3-phosphate = a 1-acyl-sn-glycero-3-phosphate + phosphate. It functions in the pathway lipid metabolism; phospholipid metabolism. Its function is as follows. Catalyzes the transfer of an acyl group from acyl-phosphate (acyl-PO(4)) to glycerol-3-phosphate (G3P) to form lysophosphatidic acid (LPA). This enzyme utilizes acyl-phosphate as fatty acyl donor, but not acyl-CoA or acyl-ACP. The protein is Glycerol-3-phosphate acyltransferase of Listeria monocytogenes serotype 4b (strain CLIP80459).